The chain runs to 381 residues: Orotidine 5'-phosphate decarboxylase (381 aa).

Substrate is bound by residues Asp42, 64-66, 99-108, Tyr333, and Arg352; these read KTH and DRKFGDIGHT. Catalysis depends on Lys101, which acts as the Proton donor. The interval 311 to 333 is disordered; that stretch reads LPPEDEDQQTNGSVGGDGQGQQY.

This sequence belongs to the OMP decarboxylase family.

The catalysed reaction is orotidine 5'-phosphate + H(+) = UMP + CO2. The protein operates within pyrimidine metabolism; UMP biosynthesis via de novo pathway; UMP from orotate: step 2/2. The protein is Orotidine 5'-phosphate decarboxylase (ura3) of Hypocrea jecorina (Trichoderma reesei).